A 450-amino-acid polypeptide reads, in one-letter code: Bifunctional protein GlmU (450 aa).

The tract at residues 1 to 226 (MLAVAVLAAG…PDEVNGINNR (226 aa)) is pyrophosphorylase. UDP-N-acetyl-alpha-D-glucosamine is bound by residues 7–10 (LAAG), Lys21, Gln73, and 78–79 (GT). Mg(2+) is bound at residue Asp103. 4 residues coordinate UDP-N-acetyl-alpha-D-glucosamine: Gly140, Glu155, Asn170, and Asn224. Position 224 (Asn224) interacts with Mg(2+). Positions 227–247 (KQLAQCEGVLQQRLRDYWMDE) are linker. The N-acetyltransferase stretch occupies residues 248 to 450 (GVTFVDPASC…TKDNWANRSI (203 aa)). UDP-N-acetyl-alpha-D-glucosamine is bound by residues Arg329 and Lys347. His359 (proton acceptor) is an active-site residue. Residues Tyr362 and Asn373 each coordinate UDP-N-acetyl-alpha-D-glucosamine. Acetyl-CoA is bound by residues Ala376, 382-383 (NY), Ala419, and Arg436.

The protein in the N-terminal section; belongs to the N-acetylglucosamine-1-phosphate uridyltransferase family. This sequence in the C-terminal section; belongs to the transferase hexapeptide repeat family. In terms of assembly, homotrimer. Mg(2+) is required as a cofactor.

It localises to the cytoplasm. The catalysed reaction is alpha-D-glucosamine 1-phosphate + acetyl-CoA = N-acetyl-alpha-D-glucosamine 1-phosphate + CoA + H(+). The enzyme catalyses N-acetyl-alpha-D-glucosamine 1-phosphate + UTP + H(+) = UDP-N-acetyl-alpha-D-glucosamine + diphosphate. It participates in nucleotide-sugar biosynthesis; UDP-N-acetyl-alpha-D-glucosamine biosynthesis; N-acetyl-alpha-D-glucosamine 1-phosphate from alpha-D-glucosamine 6-phosphate (route II): step 2/2. It functions in the pathway nucleotide-sugar biosynthesis; UDP-N-acetyl-alpha-D-glucosamine biosynthesis; UDP-N-acetyl-alpha-D-glucosamine from N-acetyl-alpha-D-glucosamine 1-phosphate: step 1/1. The protein operates within bacterial outer membrane biogenesis; LPS lipid A biosynthesis. Functionally, catalyzes the last two sequential reactions in the de novo biosynthetic pathway for UDP-N-acetylglucosamine (UDP-GlcNAc). The C-terminal domain catalyzes the transfer of acetyl group from acetyl coenzyme A to glucosamine-1-phosphate (GlcN-1-P) to produce N-acetylglucosamine-1-phosphate (GlcNAc-1-P), which is converted into UDP-GlcNAc by the transfer of uridine 5-monophosphate (from uridine 5-triphosphate), a reaction catalyzed by the N-terminal domain. The polypeptide is Bifunctional protein GlmU (Synechococcus sp. (strain CC9902)).